The primary structure comprises 537 residues: Pancreatic secretory granule membrane major glycoprotein GP2 (537 aa).

An N-terminal signal peptide occupies residues 1–28; sequence MPHLMERMVGSGLLWLALVSCILTQASA. Residues 41-60 form a beta hairpin region; that stretch reads SYGLDLDCGAPGTPEAHVCF. Disulfide bonds link Cys48-Cys59, Cys63-Cys157, Cys85-Cys172, Cys107-Cys145, Cys113-Cys177, Cys138-Cys146, Cys190-Cys200, Cys194-Cys209, Cys211-Cys241, Cys229-Cys320, and Cys261-Cys284. Positions 61-81 are D10C; the sequence is DPCQNYTLLDEPFRSTENSAG. An N-linked (GlcNAc...) (high mannose) asparagine glycan is attached at Asn65. N-linked (GlcNAc...) asparagine glycans are attached at residues Asn88, Asn122, and Asn134. The EGF-like domain occupies 186–230; the sequence is VEDKCEKACRPEEECLALNSTWGCFCRQDLNSSDVHSLQPQLDCG. Asn204, Asn216, and Asn260 each carry an N-linked (GlcNAc...) asparagine glycan. The tract at residues 228 to 321 is ZP-N; the sequence is DCGPREIKVK…TILNINFQCA (94 aa). The ZP domain maps to 228 to 484; that stretch reads DCGPREIKVK…PSCSRSQVRS (257 aa). N-linked (GlcNAc...) asparagine glycosylation is found at Asn291 and Asn342. Residues 322–345 form a flexible ZP-N/ZP-C linker region; the sequence is YPLDMKVSLQAALQPIVSSLNVSV. An internal hydrophobic patch (IHP) region spans residues 346 to 357; sequence DGNGEFIVRMAL. Residues 346–484 are ZP-C; that stretch reads DGNGEFIVRM…PSCSRSQVRS (139 aa). A glycan (N-linked (GlcNAc...) asparagine) is linked at Asn362. 3 disulfides stabilise this stretch: Cys401-Cys461, Cys422-Cys477, and Cys466-Cys473. The external hydrophobic patch (EHP) stretch occupies residues 491 to 499; the sequence is LARVLDLGP. The GPI-anchor amidated asparagine moiety is linked to residue Asn512. The propeptide at 513-537 is removed in mature form; it reads GTPSTAGFLVAWPMVLLTVLLAWLF.

In terms of assembly, interacts with SYCN. Interacts with bacterial adhesin fimH. In terms of processing, N-glycosylated. Glycosylated Asn-65 may be required for interaction with bacterial adhesin fimH. Expressed in pancreas (at protein level). Specifically expressed by M (microfold) cells which are atypical epithelial cells of the intestine (at protein level).

The protein localises to the zymogen granule membrane. Its subcellular location is the secreted. It is found in the cell membrane. It localises to the apical cell membrane. The protein resides in the membrane raft. The protein localises to the endosome. Functionally, functions as an intestinal M-cell transcytotic receptor specific for type-I-piliated bacteria that participates in the mucosal immune response toward these bacteria. At the apical membrane of M-cells it binds fimH, a protein of the bacteria type I pilus tip. Internalizes bound bacteria, like E.coli and S.typhimurium, from the lumen of the intestine and delivers them, through M-cells, to the underlying organized lymphoid follicles where they are captured by antigen-presenting dendritic cells to elicit a mucosal immune response. This is Pancreatic secretory granule membrane major glycoprotein GP2 from Homo sapiens (Human).